We begin with the raw amino-acid sequence, 304 residues long: Uricase (304 aa).

N-acetylalanine is present on alanine 2. N6-acetyllysine; alternate is present on residues lysine 10 and lysine 23. An N6-succinyllysine; alternate mark is found at lysine 10 and lysine 23. Lysine 23 acts as the Charge relay system in catalysis. An N6-acetyllysine mark is found at lysine 27 and lysine 36. Serine 39 and serine 63 each carry phosphoserine. Threonine 68 (charge relay system) is an active-site residue. Residues threonine 68 and aspartate 69 each contribute to the urate site. Lysine 118, lysine 122, and lysine 164 each carry N6-acetyllysine. A urate-binding site is contributed by phenylalanine 170. 2 positions are modified to N6-acetyllysine: lysine 175 and lysine 185. Arginine 187 contacts urate. Lysine 221 and lysine 228 each carry N6-acetyllysine; alternate. N6-succinyllysine; alternate is present on residues lysine 221 and lysine 228. Serine 232 bears the Phosphoserine mark. Residues valine 235, glutamine 236, and asparagine 262 each contribute to the urate site. Catalysis depends on histidine 264, which acts as the Charge relay system. Lysine 278 is subject to N6-acetyllysine. Tyrosine 289 is subject to Phosphotyrosine. The short motif at 302–304 (SKL) is the Microbody targeting signal element.

Belongs to the uricase family.

The protein resides in the peroxisome. The enzyme catalyses urate + O2 + H2O = 5-hydroxyisourate + H2O2. It participates in purine metabolism; urate degradation; (S)-allantoin from urate: step 1/3. Its function is as follows. Catalyzes the oxidation of uric acid to 5-hydroxyisourate, which is further processed to form (S)-allantoin. The chain is Uricase (UOX) from Canis lupus familiaris (Dog).